Reading from the N-terminus, the 321-residue chain is Putative zinc finger CCCH domain-containing protein 9 (321 aa).

Disordered regions lie at residues 1 to 59 (MADA…PGKK) and 181 to 269 (REAE…NLQE). Over residues 10 to 29 (EAERRSDETESRSIKEPKEK) the composition is skewed to basic and acidic residues. The C3H1-type zinc finger occupies 55-83 (RPGKKDCQFYLKNGLCRYRSSCRFNHPTQ). Residues 164–290 (TEWRFERERM…EARLRLEQIR (127 aa)) are a coiled coil. 2 stretches are compositionally biased toward basic and acidic residues: residues 181–224 (REAE…REAQ) and 231–244 (RQRD…REAQ).

The sequence is that of Putative zinc finger CCCH domain-containing protein 9 from Arabidopsis thaliana (Mouse-ear cress).